A 617-amino-acid chain; its full sequence is Dihydroxy-acid dehydratase (617 aa).

Asp-81 serves as a coordination point for Mg(2+). Cys-122 is a [2Fe-2S] cluster binding site. Mg(2+)-binding residues include Asp-123 and Lys-124. Lys-124 is subject to N6-carboxylysine. Residue Cys-195 coordinates [2Fe-2S] cluster. Position 491 (Glu-491) interacts with Mg(2+). Ser-517 functions as the Proton acceptor in the catalytic mechanism.

It belongs to the IlvD/Edd family. Homodimer. Requires [2Fe-2S] cluster as cofactor. Mg(2+) serves as cofactor.

The catalysed reaction is (2R)-2,3-dihydroxy-3-methylbutanoate = 3-methyl-2-oxobutanoate + H2O. The enzyme catalyses (2R,3R)-2,3-dihydroxy-3-methylpentanoate = (S)-3-methyl-2-oxopentanoate + H2O. Its pathway is amino-acid biosynthesis; L-isoleucine biosynthesis; L-isoleucine from 2-oxobutanoate: step 3/4. It functions in the pathway amino-acid biosynthesis; L-valine biosynthesis; L-valine from pyruvate: step 3/4. Functionally, functions in the biosynthesis of branched-chain amino acids. Catalyzes the dehydration of (2R,3R)-2,3-dihydroxy-3-methylpentanoate (2,3-dihydroxy-3-methylvalerate) into 2-oxo-3-methylpentanoate (2-oxo-3-methylvalerate) and of (2R)-2,3-dihydroxy-3-methylbutanoate (2,3-dihydroxyisovalerate) into 2-oxo-3-methylbutanoate (2-oxoisovalerate), the penultimate precursor to L-isoleucine and L-valine, respectively. The sequence is that of Dihydroxy-acid dehydratase from Buchnera aphidicola subsp. Diuraphis noxia.